The primary structure comprises 471 residues: Protoporphyrinogen oxidase (471 aa).

Residues 16–21, 39–40, Ala-47, 61–64, Val-251, Trp-408, and 446–448 each bind FAD; these read GGGISG, ES, GPNS, and VGL.

The protein belongs to the protoporphyrinogen/coproporphyrinogen oxidase family. Protoporphyrinogen oxidase subfamily. Monomer. Homodimer. FAD serves as cofactor.

Its subcellular location is the cytoplasm. The protein localises to the cell membrane. The catalysed reaction is protoporphyrinogen IX + 3 O2 = protoporphyrin IX + 3 H2O2. Its pathway is porphyrin-containing compound metabolism; protoporphyrin-IX biosynthesis; protoporphyrin-IX from protoporphyrinogen-IX: step 1/1. With respect to regulation, strongly inhibited by acifluorfen. Catalyzes the 6-electron oxidation of protoporphyrinogen-IX to form protoporphyrin-IX. Does not oxidize coproporphyrinogen III. Involved in the classical protoporphyrin-dependent (PPD) heme b biosynthesis. This chain is Protoporphyrinogen oxidase, found in Myxococcus xanthus.